Here is a 1700-residue protein sequence, read N- to C-terminus: Leucine-rich repeat-containing protein 37A2 (1700 aa).

An N-terminal signal peptide occupies residues 1–35; sequence MSSAQCPALVCVMSRLRFWGPWPLLMWQLLWLLVK. At 36–1582 the chain is on the extracellular side; it reads EAQPLEWVKD…VPGYGYTDKL (1547 aa). Positions 54–65 are enriched in polar residues; that stretch reads LGPPDSWSSHSS. Disordered stretches follow at residues 54 to 104, 130 to 156, 169 to 534, 559 to 580, 619 to 642, and 729 to 752; these read LGPP…ESTE, QQDL…DPAQ, QLST…AQPP, TEVE…KVVP, PEPT…KHPE, and TKPT…PDLG. Residues 137 to 160 form an LRR 1 repeat; sequence LSPQERLPVSPKKLKKDPAQRWSL. 2 stretches are compositionally biased toward polar residues: residues 169-189 and 223-237; these read QLST…STDT and ETQN…QSSS. LRR repeat units follow at residues 230–253 and 267–290; these read LEDI…LEEE and ESSM…EDQA. Over residues 238 to 249 the composition is skewed to low complexity; sequence LQQEAPAQLPQL. N-linked (GlcNAc...) asparagine glycosylation is present at N296. Residues 307 to 326 are compositionally biased toward polar residues; the sequence is TITSEPTNETESSQAQQETP. Residues 358–368 are compositionally biased toward low complexity; the sequence is SEQQQPVQPSE. The span at 433–446 shows a compositional bias: polar residues; sequence LVHQEATTRLSGSG. The span at 482 to 493 shows a compositional bias: low complexity; that stretch reads SPEPINNENPSP. The span at 729 to 749 shows a compositional bias: low complexity; it reads TKPTTEVKPSPTTEETSTQPP. LRR repeat units follow at residues 864-887, 888-911, 912-935, 937-959, 963-987, and 1002-1027; these read NGTF…VWKA, YSWT…SFEG, LLSL…TFEP, PFLK…TFQA, MQFL…LFKL, and LTTL…MACC. N1079 is a glycosylation site (N-linked (GlcNAc...) asparagine). Residues 1124-1146 form an LRR 10 repeat; the sequence is LPYFSAVNLDVKSLLLPFIKLPT. 2 stretches are compositionally biased toward basic and acidic residues: residues 1182 to 1191 and 1201 to 1216; these read VGRQSIRREQ and AEEK…EVEQ. Disordered stretches follow at residues 1182-1227 and 1309-1328; these read VGRQ…EKLA and KTRS…PKVR. A helical membrane pass occupies residues 1583–1603; sequence ILALIVTGILTILIILFCLIV. Residues 1604–1700 lie on the Cytoplasmic side of the membrane; sequence ICCHRRSLQE…TEEEESEALP (97 aa). Basic and acidic residues predominate over residues 1675-1685; it reads NEDKILNRDPG. The interval 1675–1700 is disordered; it reads NEDKILNRDPGDSEAPTEEEESEALP. Acidic residues predominate over residues 1689 to 1700; that stretch reads APTEEEESEALP.

It belongs to the LRRC37A family.

It is found in the membrane. The polypeptide is Leucine-rich repeat-containing protein 37A2 (LRRC37A2) (Homo sapiens (Human)).